Reading from the N-terminus, the 336-residue chain is Cell division protein ZipA (336 aa).

Residues 1–2 (ME) are Periplasmic-facing. The chain crosses the membrane as a helical span at residues 3–23 (LHILFFILAGLLIAVLISFSL). Topologically, residues 24–336 (WSARREKSRI…SRQSYLARVS (313 aa)) are cytoplasmic. The tract at residues 56 to 77 (PSLNPQSYAQTTGQHGETEADN) is disordered. Residues 59–70 (NPQSYAQTTGQH) show a composition bias toward polar residues.

It belongs to the ZipA family. Interacts with FtsZ via their C-terminal domains.

It localises to the cell inner membrane. Essential cell division protein that stabilizes the FtsZ protofilaments by cross-linking them and that serves as a cytoplasmic membrane anchor for the Z ring. Also required for the recruitment to the septal ring of downstream cell division proteins. The polypeptide is Cell division protein ZipA (Actinobacillus pleuropneumoniae serotype 3 (strain JL03)).